Reading from the N-terminus, the 120-residue chain is Glycine cleavage system H protein (120 aa).

The 83-residue stretch at 17 to 99 folds into the Lipoyl-binding domain; it reads IATVGITSHA…QGAGWLYRMR (83 aa). K58 is modified (N6-lipoyllysine).

This sequence belongs to the GcvH family. As to quaternary structure, the glycine cleavage system is composed of four proteins: P, T, L and H. It depends on (R)-lipoate as a cofactor.

Its function is as follows. The glycine cleavage system catalyzes the degradation of glycine. The H protein shuttles the methylamine group of glycine from the P protein to the T protein. The chain is Glycine cleavage system H protein from Methylobacterium nodulans (strain LMG 21967 / CNCM I-2342 / ORS 2060).